Reading from the N-terminus, the 1390-residue chain is DNA-directed RNA polymerase III subunit RPC1 (1390 aa).

Residues C69, C72, C79, H82, C109, and C112 each coordinate Zn(2+). Residue K144 coordinates DNA. Zn(2+)-binding residues include C156 and C159. 6 residues coordinate DNA: K167, S326, K348, R353, R360, and R366. K445 bears the N6-acetyllysine mark. R464 is a binding site for RNA. Positions 499, 501, and 503 each coordinate Mg(2+). Residue D503 coordinates RNA. Positions 843–884 (TPTEFFFHTMAGREGLVDTAVKTAETGYMQRRLVKSLEDLCS) are bridging helix. Positions 1029 to 1070 (PGSAVGALCAQSIGEPGTQMTLKTFHFAGVASMNITLGVPRI) are trigger loop. 3 residues coordinate DNA: R1159, R1305, and K1323.

This sequence belongs to the RNA polymerase beta' chain family. Component of the RNA polymerase III (Pol III) (Pol III) complex consisting of 17 subunits: a ten-subunit catalytic core composed of POLR3A/RPC1, POLR3B/RPC2, POLR1C/RPAC1, POLR1D/RPAC2, POLR3K/RPC10, POLR2E/RPABC1, POLR2F/RPABC2, POLR2H/RPABC3, POLR2K/RPABC4 and POLR2L/RPABC5; a mobile stalk composed of two subunits POLR3H/RPC8 and CRCP/RPC9, protruding from the core and functioning primarily in transcription initiation; and additional subunits homologous to general transcription factors of the RNA polymerase II machinery, POLR3C/RPC3-POLR3F/RPC6-POLR3G/RPC7 heterotrimer required for transcription initiation and POLR3D/RPC4-POLR3E/RPC5 heterodimer involved in both transcription initiation and termination. Pol III exists as two alternative complexes defined by the mutually exclusive incorporation of subunit POLR3G/RPC7alpha or POLR3GL/RPC7beta. The presence of POLR3G/RPC7alpha or POLR3GL/RPC7beta differentially modulates the transcription potential of Pol III, with POLR3G/RPC7alpha specifically associated with transcription of snaR-A non-coding RNAs. As part of the RNA polymerase III complex, interacts with PKP2. Mg(2+) serves as cofactor. As to expression, expressed in the brain, in the cortex and the white matter (at protein level).

It is found in the nucleus. Its subcellular location is the cytoplasm. It localises to the cytosol. It carries out the reaction RNA(n) + a ribonucleoside 5'-triphosphate = RNA(n+1) + diphosphate. Its function is as follows. Catalytic core component of RNA polymerase III (Pol III), a DNA-dependent RNA polymerase which synthesizes small non-coding RNAs using the four ribonucleoside triphosphates as substrates. Synthesizes 5S rRNA, snRNAs, tRNAs and miRNAs from at least 500 distinct genomic loci. Pol III-mediated transcription cycle proceeds through transcription initiation, transcription elongation and transcription termination stages. During transcription initiation, Pol III is recruited to DNA promoters type I, II or III with the help of general transcription factors and other specific initiation factors. Once the polymerase has escaped from the promoter it enters the elongation phase during which RNA is actively polymerized, based on complementarity with the template DNA strand. Transcription termination involves the release of the RNA transcript and polymerase from the DNA. Forms Pol III active center together with the second largest subunit POLR3B/RPC2. Appends one nucleotide at a time to the 3' end of the nascent RNA, with POLR3A/RPC1 contributing a Mg(2+)-coordinating DxDGD motif, and POLR3B/RPC2 participating in the coordination of a second Mg(2+) ion and providing lysine residues believed to facilitate Watson-Crick base pairing between the incoming nucleotide and template base. Typically, Mg(2+) ions direct a 5' nucleoside triphosphate to form a phosphodiester bond with the 3' hydroxyl of the preceding nucleotide of the nascent RNA, with the elimination of pyrophosphate. Pol III plays a key role in sensing and limiting infection by intracellular bacteria and DNA viruses. Acts as a nuclear and cytosolic DNA sensor involved in innate immune response. Can sense non-self dsDNA that serves as template for transcription into dsRNA. The non-self RNA polymerase III transcripts, such as Epstein-Barr virus-encoded RNAs (EBERs) induce type I interferon and NF-kappa-B through the RIG-I pathway. The protein is DNA-directed RNA polymerase III subunit RPC1 of Homo sapiens (Human).